A 122-amino-acid polypeptide reads, in one-letter code: Protein FAM223A (122 aa).

It belongs to the FAM223 family.

In Homo sapiens (Human), this protein is Protein FAM223A (FAM223A).